We begin with the raw amino-acid sequence, 437 residues long: Glutamate-1-semialdehyde 2,1-aminomutase 1 (437 aa).

Residue Lys-268 is modified to N6-(pyridoxal phosphate)lysine.

Belongs to the class-III pyridoxal-phosphate-dependent aminotransferase family. HemL subfamily. Homodimer. Pyridoxal 5'-phosphate is required as a cofactor.

It localises to the cytoplasm. It carries out the reaction (S)-4-amino-5-oxopentanoate = 5-aminolevulinate. It functions in the pathway porphyrin-containing compound metabolism; protoporphyrin-IX biosynthesis; 5-aminolevulinate from L-glutamyl-tRNA(Glu): step 2/2. In Halalkalibacterium halodurans (strain ATCC BAA-125 / DSM 18197 / FERM 7344 / JCM 9153 / C-125) (Bacillus halodurans), this protein is Glutamate-1-semialdehyde 2,1-aminomutase 1.